Reading from the N-terminus, the 292-residue chain is WRKY transcription factor 55 (292 aa).

The segment at 133-155 (VERSGASGSSTPRQRRRKDEGEE) is disordered. Residues 167–235 (NTDLPPDDNH…YRGSHTCYNS (69 aa)) constitute a DNA-binding region (WRKY).

This sequence belongs to the WRKY group III family.

The protein resides in the nucleus. In terms of biological role, transcription factor. Interacts specifically with the W box (5'-(T)TGAC[CT]-3'), a frequently occurring elicitor-responsive cis-acting element. This is WRKY transcription factor 55 (WRKY55) from Arabidopsis thaliana (Mouse-ear cress).